The primary structure comprises 97 residues: Venom peptide HsVx1 (97 aa).

A signal peptide spans 1–20 (MSHLRIAVTFLCTLFALTAG).

Belongs to the scorpion La1-like peptide family. Contains 4 disulfide bonds. In terms of tissue distribution, expressed by the venom gland.

It localises to the secreted. This is Venom peptide HsVx1 from Heterometrus spinifer (Asia giant forest scorpion).